Consider the following 102-residue polypeptide: Monothiol glutaredoxin-S7 (102 aa).

The Glutaredoxin domain maps to 1–101; it reads MEKLQKMTSE…PMLKRVGALW (101 aa). Cys-21 provides a ligand contact to [2Fe-2S] cluster. A Responsive for interaction with TGA factors motif is present at residues 99–102; it reads ALWL.

The protein belongs to the glutaredoxin family. CC-type subfamily.

The protein localises to the cytoplasm. Its subcellular location is the nucleus. In terms of biological role, may only reduce GSH-thiol disulfides, but not protein disulfides. The chain is Monothiol glutaredoxin-S7 (GRXS7) from Arabidopsis thaliana (Mouse-ear cress).